A 339-amino-acid polypeptide reads, in one-letter code: Anthranilate phosphoribosyltransferase (339 aa).

5-phospho-alpha-D-ribose 1-diphosphate is bound by residues Gly79, 82 to 83, Ser87, 89 to 92, 107 to 115, and Ser119; these read GD, NIST, and KHGNRSISS. Residue Gly79 coordinates anthranilate. Ser91 contacts Mg(2+). Anthranilate is bound at residue Asn110. Residue Arg165 participates in anthranilate binding. Mg(2+) is bound by residues Asp224 and Glu225.

This sequence belongs to the anthranilate phosphoribosyltransferase family. In terms of assembly, homodimer. Mg(2+) serves as cofactor.

It carries out the reaction N-(5-phospho-beta-D-ribosyl)anthranilate + diphosphate = 5-phospho-alpha-D-ribose 1-diphosphate + anthranilate. Its pathway is amino-acid biosynthesis; L-tryptophan biosynthesis; L-tryptophan from chorismate: step 2/5. Functionally, catalyzes the transfer of the phosphoribosyl group of 5-phosphorylribose-1-pyrophosphate (PRPP) to anthranilate to yield N-(5'-phosphoribosyl)-anthranilate (PRA). The chain is Anthranilate phosphoribosyltransferase from Listeria innocua serovar 6a (strain ATCC BAA-680 / CLIP 11262).